The sequence spans 215 residues: NAD(P)H-hydrate epimerase (215 aa).

Residues 8–212 form the YjeF N-terminal domain; it reads MYNIENKGHD…KIGIPPEAEE (205 aa). 57-61 provides a ligand contact to (6S)-NADPHX; the sequence is NNGGD. Residues N58 and D124 each coordinate K(+). (6S)-NADPHX is bound by residues 128-134, Y139, and D157; that span reads GTGISGE. Position 160 (S160) interacts with K(+).

This sequence belongs to the NnrE/AIBP family. K(+) is required as a cofactor.

The catalysed reaction is (6R)-NADHX = (6S)-NADHX. The enzyme catalyses (6R)-NADPHX = (6S)-NADPHX. In terms of biological role, catalyzes the epimerization of the S- and R-forms of NAD(P)HX, a damaged form of NAD(P)H that is a result of enzymatic or heat-dependent hydration. This is a prerequisite for the S-specific NAD(P)H-hydrate dehydratase to allow the repair of both epimers of NAD(P)HX. The chain is NAD(P)H-hydrate epimerase from Nitrosopumilus maritimus (strain SCM1).